We begin with the raw amino-acid sequence, 529 residues long: Glutamyl-tRNA(Gln) amidotransferase subunit B-2, chloroplastic/mitochondrial (529 aa).

A disordered region spans residues 17-61 (STRVSLPRGSIPPPPTSSSSSSSSSREGRRPRFFSTTTTSAERPV).

This sequence belongs to the GatB/GatE family. GatB subfamily. As to quaternary structure, subunit of the heterotrimeric GatCAB amidotransferase (AdT) complex, composed of A, B and C subunits.

The protein localises to the mitochondrion. It is found in the plastid. The protein resides in the chloroplast. The enzyme catalyses L-glutamyl-tRNA(Gln) + L-glutamine + ATP + H2O = L-glutaminyl-tRNA(Gln) + L-glutamate + ADP + phosphate + H(+). Allows the formation of correctly charged Gln-tRNA(Gln) through the transamidation of misacylated Glu-tRNA(Gln) in chloroplasts and mitochondria. The reaction takes place in the presence of glutamine and ATP through an activated gamma-phospho-Glu-tRNA(Gln). In Micromonas commoda (strain RCC299 / NOUM17 / CCMP2709) (Picoplanktonic green alga), this protein is Glutamyl-tRNA(Gln) amidotransferase subunit B-2, chloroplastic/mitochondrial.